We begin with the raw amino-acid sequence, 379 residues long: Homoserine O-succinyltransferase (379 aa).

Positions 51–360 (NAVLICHALS…DAPQGHDAFL (310 aa)) constitute an AB hydrolase-1 domain. Ser-157 (nucleophile) is an active-site residue. Arg-227 lines the substrate pocket. Residues Asp-323 and His-356 contribute to the active site. Asp-357 contributes to the substrate binding site.

It belongs to the AB hydrolase superfamily. MetX family. Homodimer.

It is found in the cytoplasm. The catalysed reaction is L-homoserine + succinyl-CoA = O-succinyl-L-homoserine + CoA. Its pathway is amino-acid biosynthesis; L-methionine biosynthesis via de novo pathway; O-succinyl-L-homoserine from L-homoserine: step 1/1. Transfers a succinyl group from succinyl-CoA to L-homoserine, forming succinyl-L-homoserine. The protein is Homoserine O-succinyltransferase of Pseudomonas aeruginosa (strain LESB58).